The chain runs to 126 residues: uncharacterized protein (126 aa).

This is an uncharacterized protein from Columba livia (Rock dove).